The chain runs to 879 residues: MTLLTSSLLLFSLLTSRLEAIPVLEKSPAHPAHSAHPAHPSHPSPGVRILRAPESLVAPLGDEVVLECETSLQPERFEWSHRSSRSQGAGFKYLRTGTAKANVSQEAAISRLRVLVREDTLGEYRCVGWFGPLVVTSTIARLELASTSLVGAQESESPLQWRVAAGNSVLWSCGQQVQSNPSASWSYYRNGVEIKPEFIGTNGNLILSNVSSESSGSYSCQATNPASGERIQLPGLLQLQVTPEQRSLSKSPHLLKGQPSSQEITIREGSSLLLLCPGVGSPPPTVVWSSPDVVGAVKNKRSKVFGHALEISDTRVQDAGTYICFQDNGVRPALEHYIKVHVEQPPQIVRPPWADLTNEGDRLKLECEATGVPSPEIYWLLNGHSSIDDTEAELSNNFLILHSVLKRHAGYVQCFARNRLGEHSAGTLLQVNPKQIQEPRESGGTHRPKPNQGSKQKQMYPPSPPNVTRLSDESVMLRWMVPRNDGLPIVIFKVQYRMVGKRKNWQTTNDNIPYGKPKWNSELGKSFTASVTDLKPQHTYRFRILAVYSNNDNKESNTSAKFYLQPGAALDPMPVPELLEIEEYSETAVVLHWSLASDADEHLITGYYAYYRPSSSAGEYFKATIEGAHARSFKIAPLETATMYEFKLQSFSAVSASEFSALKQGRTQRPKTSTTEEPTLQMGDRDTTTPSHNETFNMSPMLTGTLGGGAVLTLLLISICLCVCRRRSSRSRGNNPNKPRMAELRDDFVPLGNCSPTKQRQRTRHIHITLNPLAQQQQGMEEKNDTDQDAPYYQRPSSYDYDPGLRRMSSSSLRRSQRTLERAGGSNGSNNGNNNNLNQSTETGPVENPGKPGRVLMKRPRLSSRSENLSSGSLNSVGV.

An N-terminal signal peptide occupies residues 1-20 (MTLLTSSLLLFSLLTSRLEA). Over 21–703 (IPVLEKSPAH…ETFNMSPMLT (683 aa)) the chain is Extracellular. Ig-like C2-type domains are found at residues 45–142 (PGVR…IARL), 132–232 (PLVV…ERIQ), 252–340 (PHLL…YIKV), and 346–432 (PQIV…LQVN). Disulfide bonds link C68-C126, C173-C220, C276-C324, and C367-C414. N102 and N209 each carry an N-linked (GlcNAc...) asparagine glycan. The segment at 426–467 (GTLLQVNPKQIQEPRESGGTHRPKPNQGSKQKQMYPPSPPNV) is disordered. Fibronectin type-III domains are found at residues 461 to 567 (PPSP…LQPG) and 575 to 670 (VPEL…TQRP). N-linked (GlcNAc...) asparagine glycosylation is present at N466. Heparin contacts are provided by R497, K501, K503, and R541. N557 carries an N-linked (GlcNAc...) asparagine glycan. The interval 662 to 698 (LKQGRTQRPKTSTTEEPTLQMGDRDTTTPSHNETFNM) is disordered. Polar residues-rich tracts occupy residues 665–678 (GRTQ…TEEP) and 688–698 (TTPSHNETFNM). N693 carries N-linked (GlcNAc...) asparagine glycosylation. The helical transmembrane segment at 704–724 (GTLGGGAVLTLLLISICLCVC) threads the bilayer. The Cytoplasmic segment spans residues 725–879 (RRRSSRSRGN…SSGSLNSVGV (155 aa)). The segment at 728-879 (SSRSRGNNPN…SSGSLNSVGV (152 aa)) is disordered. Low complexity-rich tracts occupy residues 822-836 (RAGG…NNNN) and 863-879 (SSRS…SVGV).

This sequence belongs to the immunoglobulin superfamily. IHOG family. Homodimer. Heterotetramer; 2 iHog chains bind 2 hh chains when facilitated by heparin, heparin is required to promote high-affinity interactions between hh and iHog.

It is found in the membrane. Functionally, mediates response to the active Hedgehog (Hh) protein signal in embryos, functioning upstream or at the level of patched (ptc). This chain is Interference hedgehog, found in Drosophila erecta (Fruit fly).